Consider the following 241-residue polypeptide: 1-(5-phosphoribosyl)-5-[(5-phosphoribosylamino)methylideneamino] imidazole-4-carboxamide isomerase (241 aa).

D8 functions as the Proton acceptor in the catalytic mechanism. The active-site Proton donor is D129.

This sequence belongs to the HisA/HisF family.

The protein localises to the cytoplasm. It carries out the reaction 1-(5-phospho-beta-D-ribosyl)-5-[(5-phospho-beta-D-ribosylamino)methylideneamino]imidazole-4-carboxamide = 5-[(5-phospho-1-deoxy-D-ribulos-1-ylimino)methylamino]-1-(5-phospho-beta-D-ribosyl)imidazole-4-carboxamide. The protein operates within amino-acid biosynthesis; L-histidine biosynthesis; L-histidine from 5-phospho-alpha-D-ribose 1-diphosphate: step 4/9. The chain is 1-(5-phosphoribosyl)-5-[(5-phosphoribosylamino)methylideneamino] imidazole-4-carboxamide isomerase from Caulobacter sp. (strain K31).